Reading from the N-terminus, the 273-residue chain is SPRY domain-containing SOCS box protein 4 (273 aa).

Residues 34-233 enclose the B30.2/SPRY domain; it reads PARLDQLLDM…MRYINGLDPE (200 aa). An SOCS box domain is found at 234 to 273; the sequence is PLPLMDLCRRSIRSALGRQRLRDIGSLPLPQSLKNYLQYQ.

It belongs to the SPSB family. In terms of assembly, component of the probable ECS(SPSB4) E3 ubiquitin-protein ligase complex which contains CUL5, RNF7/RBX2, Elongin BC complex and SPSB4. Interacts with CUL5; RNF7; ELOB and ELOC. Interacts with MET. Interacts (via B30.2/SPRY domain) with PAWR; this interaction occurs in association with the Elongin BC complex. Interacts with NOS2. Interacts with EPHB2.

The protein resides in the cytoplasm. It is found in the cytosol. The protein operates within protein modification; protein ubiquitination. Functionally, substrate recognition component of a SCF-like ECS (Elongin BC-CUL2/5-SOCS-box protein) E3 ubiquitin-protein ligase complex which mediates the ubiquitination and subsequent proteasomal degradation of target proteins. Negatively regulates nitric oxide (NO) production and limits cellular toxicity in activated macrophages by mediating the ubiquitination and proteasomal degradation of NOS2. Acts as a bridge which links NOS2 with the ECS E3 ubiquitin ligase complex components ELOC and CUL5. Diminishes EphB2-dependent cell repulsive responses by mediating the ubiquitination and degradation of the EphB2/CTF2. Regulates cellular clock function by mediating ubiquitination and proteasomal degradation of the circadian transcriptional repressor NR1D1. This chain is SPRY domain-containing SOCS box protein 4 (Spsb4), found in Mus musculus (Mouse).